We begin with the raw amino-acid sequence, 206 residues long: Small ribosomal subunit protein uS4 (206 aa).

The S4 RNA-binding domain occupies 96-156; sequence GRLDNVVYRM…EKAKKQSRVK (61 aa).

The protein belongs to the universal ribosomal protein uS4 family. Part of the 30S ribosomal subunit. Contacts protein S5. The interaction surface between S4 and S5 is involved in control of translational fidelity.

In terms of biological role, one of the primary rRNA binding proteins, it binds directly to 16S rRNA where it nucleates assembly of the body of the 30S subunit. Its function is as follows. With S5 and S12 plays an important role in translational accuracy. The sequence is that of Small ribosomal subunit protein uS4 from Salmonella agona (strain SL483).